Consider the following 224-residue polypeptide: Uridylate kinase (224 aa).

8–12 is an ATP binding site; that stretch reads KITGK. G43 contributes to the UMP binding site. ATP-binding residues include G44 and R48. UMP contacts are provided by residues D66 and 114 to 120; that span reads LIPGQST. Residues S140, Y146, and D149 each coordinate ATP.

The protein belongs to the UMP kinase family. Homohexamer.

It localises to the cytoplasm. It carries out the reaction UMP + ATP = UDP + ADP. It participates in pyrimidine metabolism; CTP biosynthesis via de novo pathway; UDP from UMP (UMPK route): step 1/1. Its activity is regulated as follows. Inhibited by UTP. Its function is as follows. Catalyzes the reversible phosphorylation of UMP to UDP. This chain is Uridylate kinase, found in Staphylothermus marinus (strain ATCC 43588 / DSM 3639 / JCM 9404 / F1).